The primary structure comprises 343 residues: MRN complex-interacting protein (343 aa).

Positions 75-104 (EETVSASEEENVGHQQAGNVKQQEKSQPSE) are disordered. Over residues 87–104 (GHQQAGNVKQQEKSQPSE) the composition is skewed to polar residues. Residues serine 100 and serine 115 each carry the phosphoserine modification. 3 disordered regions span residues 128-178 (SKQP…WGPQ), 193-212 (SPCL…RGPG), and 230-324 (AQFV…AQNP). The Nuclear localization signal (NLS) signature appears at 148–151 (RKRK). A compositionally biased stretch (polar residues) spans 193 to 202 (SPCLQENSAD). Residues 213-237 (KELWSPIQQVTATSSKWAQFVLPPR) form a necessary for the association with the MRN complex region. Residues 240-255 (SHVDSEQPRSLQRDPR) show a composition bias toward basic and acidic residues.

Belongs to the MRNIP family. As to quaternary structure, associates with the MRE11-RAD50-NBN (MRN) damage-sensing complex; this association is constitutive. Interacts with MRE11. Interacts with NBN. Interacts with RAD50. Phosphorylated; phosphorylation is constitutive and occurs in the absence of any DNA-damaging stimulus. Phosphorylation on Ser-115 is necessary for its nuclear retention.

It localises to the nucleus. It is found in the nucleoplasm. Its function is as follows. Plays a role in the cellular response to DNA damage and the maintenance of genome stability through its association with the MRN damage-sensing complex. Promotes chromatin loading and activity of the MRN complex to facilitate subsequent ATM-mediated DNA damage response signaling and DNA repair. The protein is MRN complex-interacting protein of Homo sapiens (Human).